A 745-amino-acid chain; its full sequence is Elongation factor G, mitochondrial (745 aa).

One can recognise a tr-type G domain in the interval 40-317 (ERIRNIGISA…AVLDYLPNPG (278 aa)). GTP contacts are provided by residues 49 to 56 (AHIDSGKT), 116 to 120 (DTPGH), and 170 to 173 (NKLD).

Belongs to the TRAFAC class translation factor GTPase superfamily. Classic translation factor GTPase family. EF-G/EF-2 subfamily.

It localises to the mitochondrion. Its pathway is protein biosynthesis; polypeptide chain elongation. In terms of biological role, mitochondrial GTPase that catalyzes the GTP-dependent ribosomal translocation step during translation elongation. During this step, the ribosome changes from the pre-translocational (PRE) to the post-translocational (POST) state as the newly formed A-site-bound peptidyl-tRNA and P-site-bound deacylated tRNA move to the P and E sites, respectively. Catalyzes the coordinated movement of the two tRNA molecules, the mRNA and conformational changes in the ribosome. Essential during development as it acts as a retrograde signal from mitochondria to the nucleus to slow down cell proliferation if mitochondrial energy output is low. The sequence is that of Elongation factor G, mitochondrial from Drosophila erecta (Fruit fly).